The chain runs to 275 residues: Ribosomal RNA small subunit methyltransferase A (275 aa).

Residues N28, L30, G55, E77, D103, and N123 each contribute to the S-adenosyl-L-methionine site.

Belongs to the class I-like SAM-binding methyltransferase superfamily. rRNA adenine N(6)-methyltransferase family. RsmA subfamily.

The protein localises to the cytoplasm. The enzyme catalyses adenosine(1518)/adenosine(1519) in 16S rRNA + 4 S-adenosyl-L-methionine = N(6)-dimethyladenosine(1518)/N(6)-dimethyladenosine(1519) in 16S rRNA + 4 S-adenosyl-L-homocysteine + 4 H(+). In terms of biological role, specifically dimethylates two adjacent adenosines (A1518 and A1519) in the loop of a conserved hairpin near the 3'-end of 16S rRNA in the 30S particle. May play a critical role in biogenesis of 30S subunits. This Allorhizobium ampelinum (strain ATCC BAA-846 / DSM 112012 / S4) (Agrobacterium vitis (strain S4)) protein is Ribosomal RNA small subunit methyltransferase A.